Here is a 317-residue protein sequence, read N- to C-terminus: Transaldolase (317 aa).

The active-site Schiff-base intermediate with substrate is K132.

The protein belongs to the transaldolase family. Type 1 subfamily. Homodimer.

The protein localises to the cytoplasm. The enzyme catalyses D-sedoheptulose 7-phosphate + D-glyceraldehyde 3-phosphate = D-erythrose 4-phosphate + beta-D-fructose 6-phosphate. It functions in the pathway carbohydrate degradation; pentose phosphate pathway; D-glyceraldehyde 3-phosphate and beta-D-fructose 6-phosphate from D-ribose 5-phosphate and D-xylulose 5-phosphate (non-oxidative stage): step 2/3. In terms of biological role, transaldolase is important for the balance of metabolites in the pentose-phosphate pathway. In Yersinia pseudotuberculosis serotype IB (strain PB1/+), this protein is Transaldolase.